The sequence spans 360 residues: UDP-N-acetylglucosamine--N-acetylmuramyl-(pentapeptide) pyrophosphoryl-undecaprenol N-acetylglucosamine transferase (360 aa).

Residues 13–15, Arg164, Ser192, and Gln293 contribute to the UDP-N-acetyl-alpha-D-glucosamine site; that span reads TGG.

It belongs to the glycosyltransferase 28 family. MurG subfamily.

Its subcellular location is the cell inner membrane. The catalysed reaction is di-trans,octa-cis-undecaprenyl diphospho-N-acetyl-alpha-D-muramoyl-L-alanyl-D-glutamyl-meso-2,6-diaminopimeloyl-D-alanyl-D-alanine + UDP-N-acetyl-alpha-D-glucosamine = di-trans,octa-cis-undecaprenyl diphospho-[N-acetyl-alpha-D-glucosaminyl-(1-&gt;4)]-N-acetyl-alpha-D-muramoyl-L-alanyl-D-glutamyl-meso-2,6-diaminopimeloyl-D-alanyl-D-alanine + UDP + H(+). The protein operates within cell wall biogenesis; peptidoglycan biosynthesis. Cell wall formation. Catalyzes the transfer of a GlcNAc subunit on undecaprenyl-pyrophosphoryl-MurNAc-pentapeptide (lipid intermediate I) to form undecaprenyl-pyrophosphoryl-MurNAc-(pentapeptide)GlcNAc (lipid intermediate II). This Chromobacterium violaceum (strain ATCC 12472 / DSM 30191 / JCM 1249 / CCUG 213 / NBRC 12614 / NCIMB 9131 / NCTC 9757 / MK) protein is UDP-N-acetylglucosamine--N-acetylmuramyl-(pentapeptide) pyrophosphoryl-undecaprenol N-acetylglucosamine transferase.